Reading from the N-terminus, the 184-residue chain is MRFILVLVLILGLVSSSFGINVDKNEVSQTELQSARDFSSFAIGFAEGIEISLTGNLHKCVAAAESSFSEFSNSFHLIDSGLKHKSLGDAKSGLRDFGIGLVDLVKTYQRCGVGKFISEISAISKEVTNETGIIKLIIHEVIDIFHNSHSLTSDFKSAISDCGRGDYTGCGVASGKIVGILMRQ.

The N-terminal stretch at 1–19 is a signal peptide; it reads MRFILVLVLILGLVSSSFG. Asn-129 carries an N-linked (GlcNAc...) asparagine glycan. A Cell attachment site motif is present at residues 164 to 166; the sequence is RGD.

The protein belongs to the Sct family.

It is found in the secreted. This Dictyostelium discoideum (Social amoeba) protein is Secreted protein B (29C).